We begin with the raw amino-acid sequence, 207 residues long: Recombination protein RecR (207 aa).

Residues 62–77 form a C4-type zinc finger; sequence CSRCNTFTEQDVCETC. One can recognise a Toprim domain in the interval 85–184; that stretch reads SVLCVVETPA…KVSRLARGVP (100 aa).

The protein belongs to the RecR family.

Functionally, may play a role in DNA repair. It seems to be involved in an RecBC-independent recombinational process of DNA repair. It may act with RecF and RecO. The chain is Recombination protein RecR from Ralstonia nicotianae (strain ATCC BAA-1114 / GMI1000) (Ralstonia solanacearum).